Reading from the N-terminus, the 331-residue chain is Adenosine deaminase (331 aa).

Histidine 12 and histidine 14 together coordinate Zn(2+). Positions 14 and 16 each coordinate substrate. Histidine 197 contacts Zn(2+). The Proton donor role is filled by glutamate 200. Aspartate 278 is a binding site for Zn(2+).

Belongs to the metallo-dependent hydrolases superfamily. Adenosine and AMP deaminases family. Adenosine deaminase subfamily. The cofactor is Zn(2+).

It carries out the reaction adenosine + H2O + H(+) = inosine + NH4(+). It catalyses the reaction 2'-deoxyadenosine + H2O + H(+) = 2'-deoxyinosine + NH4(+). In terms of biological role, catalyzes the hydrolytic deamination of adenosine and 2-deoxyadenosine. The protein is Adenosine deaminase of Shewanella pealeana (strain ATCC 700345 / ANG-SQ1).